The primary structure comprises 1040 residues: Kinesin-like protein KIN-14H (1040 aa).

The Calponin-homology (CH) domain occupies 54–176 (DLRRYEAARW…CVLALKSYRE (123 aa)). The tract at residues 208–242 (SEVPVDAVTNSPSSTPSSEQPLLDQSDSNTKNDGT) is disordered. Polar residues predominate over residues 215–242 (VTNSPSSTPSSEQPLLDQSDSNTKNDGT). Positions 434–754 (SIRVYCRVRP…LKFAERVATV (321 aa)) constitute a Kinesin motor domain. 517 to 524 (GQTGSGKT) is a binding site for ATP. Residues 761–796 (VNKDTSEVKELKEQIASLKLALARKESGADQTQLQR) are a coiled coil. Positions 809–818 (LGVSSSFSKS) are enriched in low complexity. Disordered regions lie at residues 809 to 871 (LGVS…GKEE), 887 to 926 (EDEI…KCNS), and 969 to 1040 (MPRP…QNPK). Residues 840–851 (IEGQSDSASSLD) are compositionally biased toward polar residues. Over residues 887 to 923 (EDEITRSSKPENRAHTQLEKRTSSLKREATRGVDKNK) the composition is skewed to basic and acidic residues. The span at 1018 to 1031 (SPGQTSSRHNNSTV) shows a compositional bias: polar residues.

It belongs to the TRAFAC class myosin-kinesin ATPase superfamily. Kinesin family. KIN-14 subfamily.

This is Kinesin-like protein KIN-14H from Arabidopsis thaliana (Mouse-ear cress).